A 1966-amino-acid chain; its full sequence is Probable serine/threonine-protein kinase vps15 (1966 aa).

A Protein kinase domain is found at 21-303 (IVFKKSLGNA…QYFSFAHQFI (283 aa)). ATP-binding positions include 27 to 35 (LGNARFLKT) and K49. Catalysis depends on D144, which acts as the Proton acceptor. The tract at residues 362–407 (PILISNNNNNNNNNNNNNNNNNNNNNNNNNNNNNNNNNQTTTTTTN) is disordered. Residues 367–407 (NNNNNNNNNNNNNNNNNNNNNNNNNNNNNNNNNQTTTTTTN) show a composition bias toward low complexity. HEAT repeat units follow at residues 558–596 (CRLQ…MVQT), 604–642 (IFGQ…TAKR), 717–754 (KTNE…VVGA), and 756–793 (SLES…LGLL). Disordered regions lie at residues 916-937 (SFNS…TGGS), 1036-1062 (SSSN…TNST), 1106-1130 (GGIT…TGLN), and 1190-1263 (TSLS…NNMN). Composition is skewed to low complexity over residues 1106-1119 (GGIT…TTLG) and 1192-1263 (LSNS…NNMN). WD repeat units follow at residues 1460-1499 (EHKA…KSVT), 1508-1547 (QQEG…KQKN), 1564-1605 (TTRG…DAFN), and 1610-1649 (ASLG…PLYS). The disordered stretch occupies residues 1699–1743 (RSYEQPPQQQPQQPQPPQQQQQQQSQMNRSINMTSSTTTTTTSSY). Low complexity-rich tracts occupy residues 1703–1722 (QPPQ…QQQQ) and 1732–1742 (TSSTTTTTTSS). WD repeat units follow at residues 1790–1829 (KPTP…QSYY) and 1935–1966 (HHQE…KVWK).

It belongs to the protein kinase superfamily. Ser/Thr protein kinase family.

The catalysed reaction is L-seryl-[protein] + ATP = O-phospho-L-seryl-[protein] + ADP + H(+). It carries out the reaction L-threonyl-[protein] + ATP = O-phospho-L-threonyl-[protein] + ADP + H(+). This chain is Probable serine/threonine-protein kinase vps15 (vps15), found in Dictyostelium discoideum (Social amoeba).